Here is a 596-residue protein sequence, read N- to C-terminus: uncharacterized protein (596 aa).

An N-terminal signal peptide occupies residues 1–20 (MRYKPLLLALMLVFSTPAVA). 2 stretches are compositionally biased toward basic and acidic residues: residues 25-90 (AHNR…KEAT) and 161-184 (VRSD…NAKT). The tract at residues 25–184 (AHNRSAEVKK…KYREEKNAKT (160 aa)) is disordered. Coiled-coil stretches lie at residues 177–281 (REEK…RFVS) and 318–454 (NREV…TAED).

It belongs to the peptidase M23B family.

This is an uncharacterized protein from Neisseria meningitidis serogroup B (strain ATCC BAA-335 / MC58).